The chain runs to 570 residues: Proline--tRNA ligase (570 aa).

It belongs to the class-II aminoacyl-tRNA synthetase family. ProS type 1 subfamily. Homodimer.

It localises to the cytoplasm. It carries out the reaction tRNA(Pro) + L-proline + ATP = L-prolyl-tRNA(Pro) + AMP + diphosphate. In terms of biological role, catalyzes the attachment of proline to tRNA(Pro) in a two-step reaction: proline is first activated by ATP to form Pro-AMP and then transferred to the acceptor end of tRNA(Pro). As ProRS can inadvertently accommodate and process non-cognate amino acids such as alanine and cysteine, to avoid such errors it has two additional distinct editing activities against alanine. One activity is designated as 'pretransfer' editing and involves the tRNA(Pro)-independent hydrolysis of activated Ala-AMP. The other activity is designated 'posttransfer' editing and involves deacylation of mischarged Ala-tRNA(Pro). The misacylated Cys-tRNA(Pro) is not edited by ProRS. The protein is Proline--tRNA ligase of Neisseria meningitidis serogroup A / serotype 4A (strain DSM 15465 / Z2491).